The chain runs to 188 residues: A-type ATP synthase subunit E (188 aa).

This sequence belongs to the V-ATPase E subunit family. Has multiple subunits with at least A(3), B(3), C, D, E, F, H, I and proteolipid K(x).

It is found in the cell membrane. Its function is as follows. Component of the A-type ATP synthase that produces ATP from ADP in the presence of a proton gradient across the membrane. This Archaeoglobus fulgidus (strain ATCC 49558 / DSM 4304 / JCM 9628 / NBRC 100126 / VC-16) protein is A-type ATP synthase subunit E.